The chain runs to 46 residues: Protein PsbN (46 aa).

Residues Leu-10–Phe-30 form a helical membrane-spanning segment.

Belongs to the PsbN family.

It is found in the cellular thylakoid membrane. Functionally, may play a role in photosystem I and II biogenesis. The protein is Protein PsbN of Prochlorococcus marinus (strain MIT 9211).